Reading from the N-terminus, the 269-residue chain is Hydroxyethylthiazole kinase (269 aa).

Substrate is bound at residue Met42. 2 residues coordinate ATP: Arg118 and Ser164. Gly191 serves as a coordination point for substrate.

This sequence belongs to the Thz kinase family. It depends on Mg(2+) as a cofactor.

It carries out the reaction 5-(2-hydroxyethyl)-4-methylthiazole + ATP = 4-methyl-5-(2-phosphooxyethyl)-thiazole + ADP + H(+). It functions in the pathway cofactor biosynthesis; thiamine diphosphate biosynthesis; 4-methyl-5-(2-phosphoethyl)-thiazole from 5-(2-hydroxyethyl)-4-methylthiazole: step 1/1. Its function is as follows. Catalyzes the phosphorylation of the hydroxyl group of 4-methyl-5-beta-hydroxyethylthiazole (THZ). In Listeria monocytogenes serotype 4a (strain HCC23), this protein is Hydroxyethylthiazole kinase.